Reading from the N-terminus, the 380-residue chain is Putative heat stress transcription factor B-4a (380 aa).

Residues 216–245 (LLRGNAALVQELAHMRKLYSDIIYFVQNHV) are hydrophobic repeat HR-A/B. 2 disordered regions span residues 268-296 (PAGG…TVAE) and 314-380 (INEV…VSPP). Low complexity predominate over residues 278-296 (VRGASGRSATSSSSLTVAE). Positions 346–348 (RKR) match the Nuclear localization signal motif.

The protein belongs to the HSF family. Class B subfamily. As to quaternary structure, homotrimer. Exhibits temperature-dependent phosphorylation.

The protein resides in the nucleus. In terms of biological role, transcriptional regulator that specifically binds DNA of heat shock promoter elements (HSE). In Oryza sativa subsp. japonica (Rice), this protein is Putative heat stress transcription factor B-4a (HSFB4A).